We begin with the raw amino-acid sequence, 570 residues long: Glycine--tRNA ligase (570 aa).

Positions 99 and 165 each coordinate substrate. ATP-binding positions include 197 to 199, 207 to 212, 324 to 325, and 443 to 446; these read RNE, LRLREF, EC, and GIDR. Substrate is bound at residue 212-216; the sequence is FSQAE. 439–443 provides a ligand contact to substrate; that stretch reads EPSFG.

Belongs to the class-II aminoacyl-tRNA synthetase family.

Its subcellular location is the cytoplasm. It carries out the reaction tRNA(Gly) + glycine + ATP = glycyl-tRNA(Gly) + AMP + diphosphate. Functionally, catalyzes the attachment of glycine to tRNA(Gly). The polypeptide is Glycine--tRNA ligase (Thermococcus sibiricus (strain DSM 12597 / MM 739)).